Here is a 485-residue protein sequence, read N- to C-terminus: Glutamyl-tRNA(Gln) amidotransferase subunit A (485 aa).

Catalysis depends on charge relay system residues lysine 78 and serine 153. Serine 177 acts as the Acyl-ester intermediate in catalysis.

This sequence belongs to the amidase family. GatA subfamily. Heterotrimer of A, B and C subunits.

The catalysed reaction is L-glutamyl-tRNA(Gln) + L-glutamine + ATP + H2O = L-glutaminyl-tRNA(Gln) + L-glutamate + ADP + phosphate + H(+). In terms of biological role, allows the formation of correctly charged Gln-tRNA(Gln) through the transamidation of misacylated Glu-tRNA(Gln) in organisms which lack glutaminyl-tRNA synthetase. The reaction takes place in the presence of glutamine and ATP through an activated gamma-phospho-Glu-tRNA(Gln). This is Glutamyl-tRNA(Gln) amidotransferase subunit A from Geobacter sulfurreducens (strain ATCC 51573 / DSM 12127 / PCA).